Here is a 308-residue protein sequence, read N- to C-terminus: Probable manganese-dependent inorganic pyrophosphatase (308 aa).

Residues H9, D13, D15, D75, H97, and D149 each contribute to the Mn(2+) site.

This sequence belongs to the PPase class C family. Requires Mn(2+) as cofactor.

Its subcellular location is the cytoplasm. It carries out the reaction diphosphate + H2O = 2 phosphate + H(+). The protein is Probable manganese-dependent inorganic pyrophosphatase of Listeria innocua serovar 6a (strain ATCC BAA-680 / CLIP 11262).